Consider the following 328-residue polypeptide: GTP 3',8-cyclase (328 aa).

Positions 1–229 (MNTVDYLRIS…ESFVPGNGPA (229 aa)) constitute a Radical SAM core domain. GTP is bound at residue arginine 8. [4Fe-4S] cluster is bound by residues cysteine 15 and cysteine 19. Tyrosine 21 lines the S-adenosyl-L-methionine pocket. Cysteine 22 contacts [4Fe-4S] cluster. Arginine 60 serves as a coordination point for GTP. Glycine 64 provides a ligand contact to S-adenosyl-L-methionine. Threonine 91 contributes to the GTP binding site. Serine 115 is a binding site for S-adenosyl-L-methionine. Residue lysine 155 coordinates GTP. Residue methionine 189 coordinates S-adenosyl-L-methionine. Positions 252 and 255 each coordinate [4Fe-4S] cluster. 257–259 (RMR) is a binding site for GTP. Cysteine 269 provides a ligand contact to [4Fe-4S] cluster.

Belongs to the radical SAM superfamily. MoaA family. As to quaternary structure, monomer and homodimer. The cofactor is [4Fe-4S] cluster.

The enzyme catalyses GTP + AH2 + S-adenosyl-L-methionine = (8S)-3',8-cyclo-7,8-dihydroguanosine 5'-triphosphate + 5'-deoxyadenosine + L-methionine + A + H(+). The protein operates within cofactor biosynthesis; molybdopterin biosynthesis. Its function is as follows. Catalyzes the cyclization of GTP to (8S)-3',8-cyclo-7,8-dihydroguanosine 5'-triphosphate. The polypeptide is GTP 3',8-cyclase (Trichodesmium erythraeum (strain IMS101)).